A 255-amino-acid chain; its full sequence is Pimeloyl-[acyl-carrier protein] methyl ester esterase (255 aa).

In terms of domain architecture, AB hydrolase-1 spans 16 to 242; sequence LVLLHGWGLN…AAHAPFISHP (227 aa). Substrate contacts are provided by residues Trp-22, 82-83, and 143-147; these read SL and FLALQ. Ser-82 functions as the Nucleophile in the catalytic mechanism. Catalysis depends on residues Asp-207 and His-235. Residue His-235 coordinates substrate.

The protein belongs to the AB hydrolase superfamily. Carboxylesterase BioH family. As to quaternary structure, monomer.

It localises to the cytoplasm. The catalysed reaction is 6-carboxyhexanoyl-[ACP] methyl ester + H2O = 6-carboxyhexanoyl-[ACP] + methanol + H(+). Its pathway is cofactor biosynthesis; biotin biosynthesis. Its function is as follows. The physiological role of BioH is to remove the methyl group introduced by BioC when the pimeloyl moiety is complete. It allows to synthesize pimeloyl-ACP via the fatty acid synthetic pathway through the hydrolysis of the ester bonds of pimeloyl-ACP esters. The polypeptide is Pimeloyl-[acyl-carrier protein] methyl ester esterase (Pectobacterium atrosepticum (strain SCRI 1043 / ATCC BAA-672) (Erwinia carotovora subsp. atroseptica)).